Consider the following 208-residue polypeptide: MTKGILGKKVGMTQIFTESGEFIPVTVIEATPNVVLQVKTVETDGYEAIQVGFDDKREVLSNKPAKGHVAKANTAPKRFIREFKNIEGLEVGAEITVDIFAAGDVVDVTGTSKGKGFQGVIKRHGQSRGPMAHGSRYHRRPGSMGPVAPNRVFKNKHLAGRMGGNRVTIQNLEIVQVIPEKNVILIKGNVPGAKKSLITIKSAVKAAK.

The tract at residues 117–147 (FQGVIKRHGQSRGPMAHGSRYHRRPGSMGPV) is disordered.

It belongs to the universal ribosomal protein uL3 family. Part of the 50S ribosomal subunit. Forms a cluster with proteins L14 and L19.

In terms of biological role, one of the primary rRNA binding proteins, it binds directly near the 3'-end of the 23S rRNA, where it nucleates assembly of the 50S subunit. The sequence is that of Large ribosomal subunit protein uL3 from Streptococcus equi subsp. zooepidemicus (strain H70).